We begin with the raw amino-acid sequence, 482 residues long: tRNA sulfurtransferase (482 aa).

In terms of domain architecture, THUMP spans 61 to 165 (LAIRDALTRI…DDRLLLIKGR (105 aa)). ATP contacts are provided by residues 183 to 184 (LI), Lys-265, Gly-287, and Gln-296. A disulfide bridge connects residues Cys-344 and Cys-456. The Rhodanese domain maps to 404-482 (FGPNDVILDI…GFNNVKVYRP (79 aa)). Cys-456 functions as the Cysteine persulfide intermediate in the catalytic mechanism.

It belongs to the ThiI family.

The protein resides in the cytoplasm. The catalysed reaction is [ThiI sulfur-carrier protein]-S-sulfanyl-L-cysteine + a uridine in tRNA + 2 reduced [2Fe-2S]-[ferredoxin] + ATP + H(+) = [ThiI sulfur-carrier protein]-L-cysteine + a 4-thiouridine in tRNA + 2 oxidized [2Fe-2S]-[ferredoxin] + AMP + diphosphate. It carries out the reaction [ThiS sulfur-carrier protein]-C-terminal Gly-Gly-AMP + S-sulfanyl-L-cysteinyl-[cysteine desulfurase] + AH2 = [ThiS sulfur-carrier protein]-C-terminal-Gly-aminoethanethioate + L-cysteinyl-[cysteine desulfurase] + A + AMP + 2 H(+). It participates in cofactor biosynthesis; thiamine diphosphate biosynthesis. In terms of biological role, catalyzes the ATP-dependent transfer of a sulfur to tRNA to produce 4-thiouridine in position 8 of tRNAs, which functions as a near-UV photosensor. Also catalyzes the transfer of sulfur to the sulfur carrier protein ThiS, forming ThiS-thiocarboxylate. This is a step in the synthesis of thiazole, in the thiamine biosynthesis pathway. The sulfur is donated as persulfide by IscS. The protein is tRNA sulfurtransferase of Escherichia coli O45:K1 (strain S88 / ExPEC).